A 256-amino-acid chain; its full sequence is 2-aminoethanethiol dioxygenase (256 aa).

Residues His100, His102, and His179 each contribute to the Fe cation site.

In terms of assembly, monomer. Requires Fe cation as cofactor. As to expression, ubiquitous, with highest expression in brain, heart and skeletal muscle (at protein level).

It carries out the reaction cysteamine + O2 = hypotaurine + H(+). The catalysed reaction is N-terminal L-cysteinyl-[protein] + O2 = N-terminal S-hydroxy-S-oxy-L-cysteinyl-[protein] + H(+). In terms of biological role, plays a vital role in regulating thiol metabolism and preserving oxygen homeostasis by oxidizing the sulfur of cysteamine and N-terminal cysteine-containing proteins to their corresponding sulfinic acids using O2 as a cosubstrate. Catalyzes the oxidation of cysteamine (2-aminoethanethiol) to hypotaurine. Catalyzes the oxidation of the regulator of G-protein signaling 5 (RGS5). Also oxidizes proteins RGS4 and interleukin-32 (IL32). The chain is 2-aminoethanethiol dioxygenase (Ado) from Mus musculus (Mouse).